The following is a 124-amino-acid chain: UPF0299 membrane protein VIBHAR_02118 (124 aa).

4 helical membrane passes run 6-26, 35-55, 72-92, and 95-115; these read LLQLVHLLISLALIMGALGIG, VSVPGSVIGMLVLFFSMTLGL, MILLFVPISVGLMQHFDMLLA, and LPIIASAVGGSLIVLISLAWF.

Belongs to the UPF0299 family.

It is found in the cell inner membrane. The sequence is that of UPF0299 membrane protein VIBHAR_02118 from Vibrio campbellii (strain ATCC BAA-1116).